The primary structure comprises 363 residues: Anhydro-N-acetylmuramic acid kinase (363 aa).

10–17 (GTSLDGMD) contacts ATP.

Belongs to the anhydro-N-acetylmuramic acid kinase family.

It carries out the reaction 1,6-anhydro-N-acetyl-beta-muramate + ATP + H2O = N-acetyl-D-muramate 6-phosphate + ADP + H(+). It functions in the pathway amino-sugar metabolism; 1,6-anhydro-N-acetylmuramate degradation. Its pathway is cell wall biogenesis; peptidoglycan recycling. Functionally, catalyzes the specific phosphorylation of 1,6-anhydro-N-acetylmuramic acid (anhMurNAc) with the simultaneous cleavage of the 1,6-anhydro ring, generating MurNAc-6-P. Is required for the utilization of anhMurNAc either imported from the medium or derived from its own cell wall murein, and thus plays a role in cell wall recycling. Contributes to intrinsic fosfomycin resistance in P.aeruginosa. The sequence is that of Anhydro-N-acetylmuramic acid kinase from Pseudomonas aeruginosa (strain ATCC 15692 / DSM 22644 / CIP 104116 / JCM 14847 / LMG 12228 / 1C / PRS 101 / PAO1).